The following is a 287-amino-acid chain: rRNA adenine N-6-methyltransferase (287 aa).

Positions 1–13 are enriched in basic residues; it reads MKKKNHKYRGKKL. The interval 1 to 21 is disordered; that stretch reads MKKKNHKYRGKKLNRGESPNF. The S-adenosyl-L-methionine site is built by H25, M27, G52, E73, D98, and N114.

The protein belongs to the class I-like SAM-binding methyltransferase superfamily. rRNA adenine N(6)-methyltransferase family.

In terms of biological role, involved in erythromycin resistance. The protein is rRNA adenine N-6-methyltransferase (ermD) of Bacillus licheniformis.